The primary structure comprises 105 residues: Large ribosomal subunit protein eL36 (105 aa).

A disordered region spans residues 1 to 20; it reads MAKEAPAKTGLAVGLNKGHK.

It belongs to the eukaryotic ribosomal protein eL36 family.

The chain is Large ribosomal subunit protein eL36 (rpl36) from Trichoderma hamatum.